A 377-amino-acid polypeptide reads, in one-letter code: tRNA N6-adenosine threonylcarbamoyltransferase (377 aa).

His-129 and His-133 together coordinate Fe cation. Residues 151 to 155 (LVSGG), Asp-184, Gly-197, and Asn-298 each bind substrate. Residue Asp-326 coordinates Fe cation. Residues 358 to 377 (DGAAAKSDPAIGSGRKGPKA) are disordered.

It belongs to the KAE1 / TsaD family. It depends on Fe(2+) as a cofactor.

Its subcellular location is the cytoplasm. The enzyme catalyses L-threonylcarbamoyladenylate + adenosine(37) in tRNA = N(6)-L-threonylcarbamoyladenosine(37) in tRNA + AMP + H(+). In terms of biological role, required for the formation of a threonylcarbamoyl group on adenosine at position 37 (t(6)A37) in tRNAs that read codons beginning with adenine. Is involved in the transfer of the threonylcarbamoyl moiety of threonylcarbamoyl-AMP (TC-AMP) to the N6 group of A37, together with TsaE and TsaB. TsaD likely plays a direct catalytic role in this reaction. This is tRNA N6-adenosine threonylcarbamoyltransferase from Maricaulis maris (strain MCS10) (Caulobacter maris).